A 588-amino-acid chain; its full sequence is Protein gamma response 1 (588 aa).

Coiled-coil stretches lie at residues 64 to 104 (AACD…LGKT) and 164 to 281 (SEVK…KTVV). Basic and acidic residues-rich tracts occupy residues 377 to 389 (KHSETAEGADKVR), 465 to 484 (NVKRVAGEEKHVHDVAKKDD), and 508 to 525 (TSKKSFKHVESVRKKAER). Disordered regions lie at residues 377 to 398 (KHSETAEGADKVRIGTGSSGNN) and 417 to 525 (PIVR…KAER).

Basal levels in mitotically dividing cells (meristems), and high levels in endoreduplicating cells (stipules, trichomes) (at protein level).

It localises to the nucleus. Functionally, seems to mediate cell cycle arrest before mitosis in response to DNA damage. Is probably also involved in the transition from mitosis to endoreduplication. This is Protein gamma response 1 (GR1) from Arabidopsis thaliana (Mouse-ear cress).